Here is a 162-residue protein sequence, read N- to C-terminus: Nucleotide-binding protein Anae109_0095 (162 aa).

Belongs to the YajQ family.

In terms of biological role, nucleotide-binding protein. In Anaeromyxobacter sp. (strain Fw109-5), this protein is Nucleotide-binding protein Anae109_0095.